A 254-amino-acid chain; its full sequence is uncharacterized protein (254 aa).

The active-site Acyl-thioester intermediate is the Cys71. Catalysis depends on residues His110 and Asp125.

The protein belongs to the arylamine N-acetyltransferase family.

This is an uncharacterized protein from Bacillus subtilis (strain 168).